The chain runs to 636 residues: 1-deoxy-D-xylulose-5-phosphate synthase (636 aa).

Residues histidine 74 and 115-117 (GHA) contribute to the thiamine diphosphate site. Mg(2+) is bound at residue aspartate 146. Thiamine diphosphate is bound by residues 147-148 (GA), asparagine 175, tyrosine 285, and glutamate 368. Mg(2+) is bound at residue asparagine 175.

This sequence belongs to the transketolase family. DXPS subfamily. Homodimer. Requires Mg(2+) as cofactor. The cofactor is thiamine diphosphate.

The enzyme catalyses D-glyceraldehyde 3-phosphate + pyruvate + H(+) = 1-deoxy-D-xylulose 5-phosphate + CO2. It participates in metabolic intermediate biosynthesis; 1-deoxy-D-xylulose 5-phosphate biosynthesis; 1-deoxy-D-xylulose 5-phosphate from D-glyceraldehyde 3-phosphate and pyruvate: step 1/1. Catalyzes the acyloin condensation reaction between C atoms 2 and 3 of pyruvate and glyceraldehyde 3-phosphate to yield 1-deoxy-D-xylulose-5-phosphate (DXP). In Anaeromyxobacter dehalogenans (strain 2CP-1 / ATCC BAA-258), this protein is 1-deoxy-D-xylulose-5-phosphate synthase.